A 271-amino-acid chain; its full sequence is MNTPEDSSLGREVAYPSGYDPSLLFPIPRAAGRAAVGLSGALPFVGRDRWHAYELSWLDAHGKPCVATATLHVPCESPALIESKSLKLYLNSLNATRFNSAEAVRARIATDLSTRAGADVSVEFGLPPIDAVGEGESIDALDIAIDDYGPPKADYLATHAGTVVEEVLASALLKSNCPVTGQPDWASVTLRYRGAPIDREGLLRYLVSFRDHADFHEQCVERIFQDLLVRCAPQWLVVEARYTRRGGLDINPVRTSPQMPTPLSIFRDLRQ.

81-83 (IES) provides a ligand contact to substrate. 83–84 (SK) provides a ligand contact to NADPH. The active-site Thioimide intermediate is the Cys-177. Asp-184 acts as the Proton donor in catalysis. 216 to 217 (HE) is a substrate binding site. 245 to 246 (RG) provides a ligand contact to NADPH.

It belongs to the GTP cyclohydrolase I family. QueF type 2 subfamily. As to quaternary structure, homodimer.

Its subcellular location is the cytoplasm. The enzyme catalyses 7-aminomethyl-7-carbaguanine + 2 NADP(+) = 7-cyano-7-deazaguanine + 2 NADPH + 3 H(+). The protein operates within tRNA modification; tRNA-queuosine biosynthesis. In terms of biological role, catalyzes the NADPH-dependent reduction of 7-cyano-7-deazaguanine (preQ0) to 7-aminomethyl-7-deazaguanine (preQ1). The polypeptide is NADPH-dependent 7-cyano-7-deazaguanine reductase (Xanthomonas campestris pv. campestris (strain B100)).